The chain runs to 276 residues: Dermonecrotic toxin LspiSicTox-betaIE4ii (276 aa).

The active site involves histidine 5. 2 residues coordinate Mg(2+): glutamate 25 and aspartate 27. Histidine 41 serves as the catalytic Nucleophile. Cystine bridges form between cysteine 45–cysteine 51 and cysteine 47–cysteine 189. Aspartate 85 is a binding site for Mg(2+).

This sequence belongs to the arthropod phospholipase D family. Class II subfamily. Mg(2+) serves as cofactor. As to expression, expressed by the venom gland.

It is found in the secreted. The enzyme catalyses an N-(acyl)-sphingosylphosphocholine = an N-(acyl)-sphingosyl-1,3-cyclic phosphate + choline. It catalyses the reaction an N-(acyl)-sphingosylphosphoethanolamine = an N-(acyl)-sphingosyl-1,3-cyclic phosphate + ethanolamine. It carries out the reaction a 1-acyl-sn-glycero-3-phosphocholine = a 1-acyl-sn-glycero-2,3-cyclic phosphate + choline. The catalysed reaction is a 1-acyl-sn-glycero-3-phosphoethanolamine = a 1-acyl-sn-glycero-2,3-cyclic phosphate + ethanolamine. Dermonecrotic toxins cleave the phosphodiester linkage between the phosphate and headgroup of certain phospholipids (sphingolipid and lysolipid substrates), forming an alcohol (often choline) and a cyclic phosphate. This toxin acts on sphingomyelin (SM). It may also act on ceramide phosphoethanolamine (CPE), lysophosphatidylcholine (LPC) and lysophosphatidylethanolamine (LPE), but not on lysophosphatidylserine (LPS), and lysophosphatidylglycerol (LPG). It acts by transphosphatidylation, releasing exclusively cyclic phosphate products as second products. Induces dermonecrosis, hemolysis, increased vascular permeability, edema, inflammatory response, and platelet aggregation. This Loxosceles spinulosa (Recluse spider) protein is Dermonecrotic toxin LspiSicTox-betaIE4ii.